The chain runs to 703 residues: Elongation factor G (703 aa).

The region spanning Glu9–Leu292 is the tr-type G domain. GTP is bound by residues Ala18–Thr25, Asp91–His95, and Asn145–Asp148.

It belongs to the TRAFAC class translation factor GTPase superfamily. Classic translation factor GTPase family. EF-G/EF-2 subfamily.

It localises to the cytoplasm. In terms of biological role, catalyzes the GTP-dependent ribosomal translocation step during translation elongation. During this step, the ribosome changes from the pre-translocational (PRE) to the post-translocational (POST) state as the newly formed A-site-bound peptidyl-tRNA and P-site-bound deacylated tRNA move to the P and E sites, respectively. Catalyzes the coordinated movement of the two tRNA molecules, the mRNA and conformational changes in the ribosome. The polypeptide is Elongation factor G (Leuconostoc citreum (strain KM20)).